Consider the following 368-residue polypeptide: Agmatine deiminase (368 aa).

Catalysis depends on C357, which acts as the Amidino-cysteine intermediate.

The protein belongs to the agmatine deiminase family. In terms of assembly, homodimer.

The catalysed reaction is agmatine + H2O = N-carbamoylputrescine + NH4(+). It participates in amine and polyamine biosynthesis; putrescine biosynthesis via agmatine pathway; N-carbamoylputrescine from agmatine: step 1/1. In terms of biological role, mediates the hydrolysis of agmatine into N-carbamoylputrescine in the arginine decarboxylase (ADC) pathway of putrescine biosynthesis, a basic polyamine. The polypeptide is Agmatine deiminase (Pseudomonas savastanoi pv. phaseolicola (strain 1448A / Race 6) (Pseudomonas syringae pv. phaseolicola (strain 1448A / Race 6))).